A 212-amino-acid chain; its full sequence is Large ribosomal subunit protein bL25 (212 aa).

The segment at 1-25 (MSQSTIHKIAVKKRTETGKNENNRL) is disordered. Basic and acidic residues predominate over residues 13–24 (KRTETGKNENNR).

It belongs to the bacterial ribosomal protein bL25 family. CTC subfamily. In terms of assembly, part of the 50S ribosomal subunit; part of the 5S rRNA/L5/L18/L25 subcomplex. Contacts the 5S rRNA. Binds to the 5S rRNA independently of L5 and L18.

This is one of the proteins that binds to the 5S RNA in the ribosome where it forms part of the central protuberance. This chain is Large ribosomal subunit protein bL25, found in Leptospira borgpetersenii serovar Hardjo-bovis (strain JB197).